A 480-amino-acid chain; its full sequence is NADH-quinone oxidoreductase subunit N (480 aa).

13 consecutive transmembrane segments (helical) span residues 11 to 31 (VIPE…DLFV), 38 to 58 (ITYG…IALA), 74 to 94 (GLSD…FLYS), 109 to 129 (YVLG…YSFL), 163 to 183 (FILG…LYGI), 200 to 220 (GAGL…GLAF), 239 to 259 (PTSV…AIIM), 273 to 293 (WQGM…VVAI), 301 to 321 (MLAY…LAGT), 329 to 349 (LFYT…IILL), 372 to 392 (FAFI…TVGF), 405 to 425 (VEMI…AFYY), and 451 to 471 (VVLS…GLLM).

Belongs to the complex I subunit 2 family. As to quaternary structure, NDH-1 is composed of 14 different subunits. Subunits NuoA, H, J, K, L, M, N constitute the membrane sector of the complex.

It is found in the cell inner membrane. It catalyses the reaction a quinone + NADH + 5 H(+)(in) = a quinol + NAD(+) + 4 H(+)(out). NDH-1 shuttles electrons from NADH, via FMN and iron-sulfur (Fe-S) centers, to quinones in the respiratory chain. The immediate electron acceptor for the enzyme in this species is believed to be ubiquinone. Couples the redox reaction to proton translocation (for every two electrons transferred, four hydrogen ions are translocated across the cytoplasmic membrane), and thus conserves the redox energy in a proton gradient. The polypeptide is NADH-quinone oxidoreductase subunit N (Thioalkalivibrio sulfidiphilus (strain HL-EbGR7)).